Here is a 197-residue protein sequence, read N- to C-terminus: Peptidyl-tRNA hydrolase (197 aa).

A tRNA-binding site is contributed by Tyr-21. The Proton acceptor role is filled by His-26. Residues Tyr-72, Asn-74, and Asn-120 each coordinate tRNA.

It belongs to the PTH family. As to quaternary structure, monomer.

The protein resides in the cytoplasm. It carries out the reaction an N-acyl-L-alpha-aminoacyl-tRNA + H2O = an N-acyl-L-amino acid + a tRNA + H(+). Hydrolyzes ribosome-free peptidyl-tRNAs (with 1 or more amino acids incorporated), which drop off the ribosome during protein synthesis, or as a result of ribosome stalling. Its function is as follows. Catalyzes the release of premature peptidyl moieties from peptidyl-tRNA molecules trapped in stalled 50S ribosomal subunits, and thus maintains levels of free tRNAs and 50S ribosomes. In Saccharophagus degradans (strain 2-40 / ATCC 43961 / DSM 17024), this protein is Peptidyl-tRNA hydrolase.